The chain runs to 299 residues: ATP phosphoribosyltransferase (299 aa).

This sequence belongs to the ATP phosphoribosyltransferase family. Long subfamily. Mg(2+) serves as cofactor.

The protein localises to the cytoplasm. The catalysed reaction is 1-(5-phospho-beta-D-ribosyl)-ATP + diphosphate = 5-phospho-alpha-D-ribose 1-diphosphate + ATP. Its pathway is amino-acid biosynthesis; L-histidine biosynthesis; L-histidine from 5-phospho-alpha-D-ribose 1-diphosphate: step 1/9. Feedback inhibited by histidine. Catalyzes the condensation of ATP and 5-phosphoribose 1-diphosphate to form N'-(5'-phosphoribosyl)-ATP (PR-ATP). Has a crucial role in the pathway because the rate of histidine biosynthesis seems to be controlled primarily by regulation of HisG enzymatic activity. In Shewanella sediminis (strain HAW-EB3), this protein is ATP phosphoribosyltransferase.